The chain runs to 235 residues: Aspartate/glutamate leucyltransferase (235 aa).

Belongs to the R-transferase family. Bpt subfamily.

Its subcellular location is the cytoplasm. It carries out the reaction N-terminal L-glutamyl-[protein] + L-leucyl-tRNA(Leu) = N-terminal L-leucyl-L-glutamyl-[protein] + tRNA(Leu) + H(+). The catalysed reaction is N-terminal L-aspartyl-[protein] + L-leucyl-tRNA(Leu) = N-terminal L-leucyl-L-aspartyl-[protein] + tRNA(Leu) + H(+). Its function is as follows. Functions in the N-end rule pathway of protein degradation where it conjugates Leu from its aminoacyl-tRNA to the N-termini of proteins containing an N-terminal aspartate or glutamate. In Pseudomonas paraeruginosa (strain DSM 24068 / PA7) (Pseudomonas aeruginosa (strain PA7)), this protein is Aspartate/glutamate leucyltransferase.